An 89-amino-acid chain; its full sequence is UPF0335 protein OCAR_5086/OCA5_c28780 (89 aa).

This sequence belongs to the UPF0335 family.

This is UPF0335 protein OCAR_5086/OCA5_c28780 from Afipia carboxidovorans (strain ATCC 49405 / DSM 1227 / KCTC 32145 / OM5) (Oligotropha carboxidovorans).